The following is a 205-amino-acid chain: Small ribosomal subunit protein uS4c (205 aa).

The interval 16 to 40 (GKLPSLTNKTSKKRKSPGQPATSFK) is disordered. Residues 93–161 (MRLDNIVHRI…IQKNIESKEL (69 aa)) enclose the S4 RNA-binding domain.

This sequence belongs to the universal ribosomal protein uS4 family. As to quaternary structure, part of the 30S ribosomal subunit. Contacts protein S5. The interaction surface between S4 and S5 is involved in control of translational fidelity.

It is found in the plastid. The protein resides in the chloroplast. Its function is as follows. One of the primary rRNA binding proteins, it binds directly to 16S rRNA where it nucleates assembly of the body of the 30S subunit. In terms of biological role, with S5 and S12 plays an important role in translational accuracy. This chain is Small ribosomal subunit protein uS4c (rps4), found in Euglena gracilis.